A 701-amino-acid polypeptide reads, in one-letter code: MNPVIKTFQFGQSTVTLETGRIARQATGAVLVTVDNDVTVLVTVVGAKQADPGKGFFPLSVHYQEKTYAAGKIPGGFFKREGRPSEKETLTSRLIDRPIRPLFPEGFMNEVQVVCTVVSTSKKTDPDIAAMIGTSAALAISGIPFEGPIGAARVAFHESTGYLLNPTYEQLAASSLDMVVAGTSDAVLMVESEAQELTEDQMLGAVLFAHDEFQAVIQAVKELAAEAGKPTWDWKPAVANTELFNAIRAEFGEAVSQGYTITVKADRYARLGELRDQAVAKFSGEEGQPSASEVKEIFGEIEYRTVRENIVNGKPRIDGRDNKTVRPLNIEVGVLPKTHGSALFTRGETQALVVATLGTARDAQLLDTLEGEKKDPFMLHYNFPPFSVGECGRMGGAGRREIGHGRLARRSVQAMLPAADVFPYTIRVVSEITESNGSSSMASVCGASLALMDAGVPMKAPVAGIAMGLVKEGDKFAVLTDILGDEDHLGDMDFKVAGTAKGVTALQMDIKINGITEEIMEIALGQALEARLNILGQMNQVIGQSRTELSANAPTMIAMKIDTDKIRDVIGKGGATIRAICEETKASIDIEDDGSIKIFGETKEAADAAKQRILGITAEAEIGKIYVGKVERIVDFGAFVNILPGKDGLVHISMLSDARVEKVTDILKEGQEVEVLVLDVDNRGRIKLSIKDVAAAKASGV.

Mg(2+) is bound by residues Asp487 and Asp493. Positions 554 to 613 (PTMIAMKIDTDKIRDVIGKGGATIRAICEETKASIDIEDDGSIKIFGETKEAADAAKQRI) constitute a KH domain. One can recognise an S1 motif domain in the interval 623 to 691 (GKIYVGKVER…NRGRIKLSIK (69 aa)).

It belongs to the polyribonucleotide nucleotidyltransferase family. In terms of assembly, component of the RNA degradosome, which is a multiprotein complex involved in RNA processing and mRNA degradation. Mg(2+) serves as cofactor.

It localises to the cytoplasm. The enzyme catalyses RNA(n+1) + phosphate = RNA(n) + a ribonucleoside 5'-diphosphate. Its function is as follows. Involved in mRNA degradation. Catalyzes the phosphorolysis of single-stranded polyribonucleotides processively in the 3'- to 5'-direction. This is Polyribonucleotide nucleotidyltransferase from Pseudomonas putida (Arthrobacter siderocapsulatus).